The chain runs to 860 residues: Leucine--tRNA ligase (860 aa).

The 'HIGH' region signature appears at 42-52 (PYPSGRLHMGH). A 'KMSKS' region motif is present at residues 619-623 (KMSKS). Residue K622 participates in ATP binding.

This sequence belongs to the class-I aminoacyl-tRNA synthetase family.

It is found in the cytoplasm. It catalyses the reaction tRNA(Leu) + L-leucine + ATP = L-leucyl-tRNA(Leu) + AMP + diphosphate. This Escherichia coli (strain 55989 / EAEC) protein is Leucine--tRNA ligase.